The sequence spans 359 residues: Aromatic amino acid aminotransferase (359 aa).

The span at 1 to 12 (MSETSPKLRAEL) shows a compositional bias: basic and acidic residues. The segment at 1–21 (MSETSPKLRAELEGIPTYKPG) is disordered. Residue K223 is modified to N6-(pyridoxal phosphate)lysine.

The protein belongs to the class-II pyridoxal-phosphate-dependent aminotransferase family. As to quaternary structure, homodimer. Pyridoxal 5'-phosphate serves as cofactor.

The enzyme catalyses an aromatic L-alpha-amino acid + 2-oxoglutarate = an aromatic oxo-acid + L-glutamate. Functionally, aminotransferase that catalyzes the conversion of aromatic amino acids and 2-oxoglutarate into corresponding aromatic oxo acids and L-glutamate. The sequence is that of Aromatic amino acid aminotransferase from Streptomyces coelicolor (strain ATCC BAA-471 / A3(2) / M145).